The sequence spans 683 residues: ATP-dependent zinc metalloprotease FtsH (683 aa).

Residues methionine 1 to serine 43 form a disordered region. Over methionine 1 to lysine 70 the chain is Cytoplasmic. A compositionally biased stretch (acidic residues) spans glutamate 10–glutamate 28. A helical transmembrane segment spans residues proline 71–asparagine 91. Residues lysine 92 to serine 174 lie on the Periplasmic side of the membrane. A helical transmembrane segment spans residues isoleucine 175–phenylalanine 195. Over isoleucine 196 to tyrosine 683 the chain is Cytoplasmic. Glycine 270–threonine 277 is a binding site for ATP. Zn(2+) is bound at residue histidine 494. Glutamate 495 is an active-site residue. Histidine 498 and aspartate 569 together coordinate Zn(2+).

It in the central section; belongs to the AAA ATPase family. This sequence in the C-terminal section; belongs to the peptidase M41 family. Homohexamer. It depends on Zn(2+) as a cofactor.

It localises to the cell inner membrane. Its function is as follows. Acts as a processive, ATP-dependent zinc metallopeptidase for both cytoplasmic and membrane proteins. Plays a role in the quality control of integral membrane proteins. The sequence is that of ATP-dependent zinc metalloprotease FtsH from Streptobacillus moniliformis (strain ATCC 14647 / DSM 12112 / NCTC 10651 / 9901).